Consider the following 205-residue polypeptide: Methyltransferase-like 26 B (205 aa).

This sequence belongs to the UPF0585 family.

This Danio rerio (Zebrafish) protein is Methyltransferase-like 26 B.